We begin with the raw amino-acid sequence, 293 residues long: Pyridoxal 5'-phosphate synthase subunit PdxS (293 aa).

Asp23 is a D-ribose 5-phosphate binding site. Lys80 (schiff-base intermediate with D-ribose 5-phosphate) is an active-site residue. Gly152 is a binding site for D-ribose 5-phosphate. Residue Arg164 participates in D-glyceraldehyde 3-phosphate binding. Residues Gly213 and 234–235 (GS) contribute to the D-ribose 5-phosphate site.

This sequence belongs to the PdxS/SNZ family. As to quaternary structure, in the presence of PdxT, forms a dodecamer of heterodimers.

It catalyses the reaction aldehydo-D-ribose 5-phosphate + D-glyceraldehyde 3-phosphate + L-glutamine = pyridoxal 5'-phosphate + L-glutamate + phosphate + 3 H2O + H(+). It functions in the pathway cofactor biosynthesis; pyridoxal 5'-phosphate biosynthesis. Functionally, catalyzes the formation of pyridoxal 5'-phosphate from ribose 5-phosphate (RBP), glyceraldehyde 3-phosphate (G3P) and ammonia. The ammonia is provided by the PdxT subunit. Can also use ribulose 5-phosphate and dihydroxyacetone phosphate as substrates, resulting from enzyme-catalyzed isomerization of RBP and G3P, respectively. This is Pyridoxal 5'-phosphate synthase subunit PdxS from Niallia circulans (Bacillus circulans).